A 378-amino-acid polypeptide reads, in one-letter code: 1-acyl-sn-glycerol-3-phosphate acyltransferase delta (378 aa).

A helical membrane pass occupies residues F11–I31. Positions H96–D101 match the HXXXXD motif motif. 3 helical membrane passes run E125–T145, W311–S331, and L338–V358.

Belongs to the 1-acyl-sn-glycerol-3-phosphate acyltransferase family.

It localises to the endoplasmic reticulum membrane. The catalysed reaction is a 1-acyl-sn-glycero-3-phosphate + an acyl-CoA = a 1,2-diacyl-sn-glycero-3-phosphate + CoA. It carries out the reaction (4Z,7Z,10Z,13Z,16Z,19Z)-docosahexaenoyl-CoA + 1-hexadecanoyl-sn-glycero-3-phosphate = 1-hexadecanoyl-2-(4Z,7Z,10Z,13Z,16Z,19Z-docosahexaenoyl)-sn-glycero-3-phosphate + CoA. The enzyme catalyses 1-octadecanoyl-sn-glycero-3-phosphate + (9Z,12Z)-octadecadienoyl-CoA = 1-octadecanoyl-2-(9Z,12Z-octadecadienoyl)-sn-glycero-3-phosphate + CoA. It catalyses the reaction 1-octadecanoyl-sn-glycero-3-phosphate + (4Z,7Z,10Z,13Z,16Z,19Z)-docosahexaenoyl-CoA = 1-octadecanoyl-2-(4Z,7Z,10Z,13Z,16Z,19Z-docosahexaenoyl)-sn-glycero-3-phosphate + CoA. The catalysed reaction is (4Z,7Z,10Z,13Z,16Z,19Z)-docosahexaenoyl-CoA + 1-(9Z-octadecenoyl)-sn-glycero-3-phosphate = 1-(9Z-octadecenoyl)-2-(4Z,7Z,10Z,13Z,16Z,19Z-docosahexaenoyl)-sn-glycero-3-phosphate + CoA. It functions in the pathway phospholipid metabolism; CDP-diacylglycerol biosynthesis; CDP-diacylglycerol from sn-glycerol 3-phosphate: step 2/3. Functionally, converts 1-acyl-sn-glycerol-3-phosphate (lysophosphatidic acid or LPA) into 1,2-diacyl-sn-glycerol-3-phosphate (phosphatidic acid or PA) by incorporating an acyl moiety at the sn-2 position of the glycerol backbone. Exhibits high acyl-CoA specificity for polyunsaturated fatty acyl-CoA, especially docosahexaenoyl-CoA (22:6-CoA, DHA-CoA). The protein is 1-acyl-sn-glycerol-3-phosphate acyltransferase delta (Agpat4) of Rattus norvegicus (Rat).